The primary structure comprises 519 residues: ATP synthase subunit alpha 2 (519 aa).

179 to 186 (GDRQTGKT) contributes to the ATP binding site.

It belongs to the ATPase alpha/beta chains family. F-type ATPases have 2 components, CF(1) - the catalytic core - and CF(0) - the membrane proton channel. CF(1) has five subunits: alpha(3), beta(3), gamma(1), delta(1), epsilon(1). CF(0) has three main subunits: a(1), b(2) and c(9-12). The alpha and beta chains form an alternating ring which encloses part of the gamma chain. CF(1) is attached to CF(0) by a central stalk formed by the gamma and epsilon chains, while a peripheral stalk is formed by the delta and b chains.

It localises to the cell inner membrane. It catalyses the reaction ATP + H2O + 4 H(+)(in) = ADP + phosphate + 5 H(+)(out). In terms of biological role, produces ATP from ADP in the presence of a proton gradient across the membrane. The alpha chain is a regulatory subunit. The protein is ATP synthase subunit alpha 2 of Syntrophus aciditrophicus (strain SB).